A 427-amino-acid polypeptide reads, in one-letter code: MAMNFVTFNQDYSYLAVATSKGFQIFTTEPFAKSYEAKEGNIAVIEMLFSTSLVALILSPRRLQIQNTKRQCTICELTFPTTVLAVKLNRKRLVIVLEDQIYLYDIQTMKLLSTIDTSPNPNAICALAPSSENCYMAYPLPQKAPAAASTPAHAPPGTTHVSPTTGDVLIFDAVKLEAINVIEAHRSPLALIALNSDGTLLATASDKGTIIRIFSVPDGHKLYQFRRGSMPSRIYSMSFNTTSTLLCVSSSTETVHIFKLAQQGPSSDGSSSHSPPSRDHGSPPNTYGYAHEEDEAVGDAGSDSSLRKHNGTLMGMIRRTSQNVGGAVAARMGGYLPKGVSEMWEPARDFAWIKLPRSNPGPGGNTGAGPLRSVVAMSSNTPQVMVVTSDGNFYVFNIDLSKGGEGTLTKQYSVVDSTDRLGYTTEY.

WD repeat units follow at residues 1–36, 69–114, 184–224, 229–268, 308–354, and 366–406; these read MAMNFVTFNQDYSYLAVATSKGFQIFTTEPFAKSYE, KRQC…LLST, AHRS…KLYQ, SMPSRIYSMSFNTTSTLLCVSSSTETVHIFKLAQQGPSSD, KHNG…AWIK, and TGAG…GGEG. Positions 225–229 match the L/FRRG motif motif; that stretch reads FRRGS. The tract at residues 262 to 290 is disordered; sequence QQGPSSDGSSSHSPPSRDHGSPPNTYGYA. Residues 265 to 275 are compositionally biased toward low complexity; it reads PSSDGSSSHSP.

It belongs to the WD repeat PROPPIN family. Component of the PI(3,5)P2 regulatory complex.

The protein localises to the preautophagosomal structure membrane. It is found in the vacuole membrane. It localises to the endosome membrane. In terms of biological role, the PI(3,5)P2 regulatory complex regulates both the synthesis and turnover of phosphatidylinositol 3,5-bisphosphate (PtdIns(3,5)P2). Necessary for proper vacuole morphology. Plays an important role in osmotically-induced vacuole fragmentation. Required for cytoplasm to vacuole transport (Cvt) vesicle formation, pexophagy and starvation-induced autophagy. Involved in correct atg9 trafficking to the pre-autophagosomal structure. Might also be involved in premeiotic DNA replication. The sequence is that of Autophagy-related protein 18 (atg18) from Penicillium rubens (strain ATCC 28089 / DSM 1075 / NRRL 1951 / Wisconsin 54-1255) (Penicillium chrysogenum).